A 282-amino-acid polypeptide reads, in one-letter code: Hydroxyethylthiazole kinase 2 (282 aa).

Substrate is bound at residue methionine 44. Arginine 120 and serine 179 together coordinate ATP. Glycine 206 lines the substrate pocket.

Belongs to the Thz kinase family. The cofactor is Mg(2+).

It catalyses the reaction 5-(2-hydroxyethyl)-4-methylthiazole + ATP = 4-methyl-5-(2-phosphooxyethyl)-thiazole + ADP + H(+). The protein operates within cofactor biosynthesis; thiamine diphosphate biosynthesis; 4-methyl-5-(2-phosphoethyl)-thiazole from 5-(2-hydroxyethyl)-4-methylthiazole: step 1/1. Its function is as follows. Catalyzes the phosphorylation of the hydroxyl group of 4-methyl-5-beta-hydroxyethylthiazole (THZ). This Methanosphaera stadtmanae (strain ATCC 43021 / DSM 3091 / JCM 11832 / MCB-3) protein is Hydroxyethylthiazole kinase 2.